The sequence spans 316 residues: Beta-agarase (316 aa).

Residues 1–18 form the signal peptide; sequence MKRKLFTICLASLQFACA. Residues 27–315 enclose the GH16 domain; sequence YEWDIYPVPA…WIRVYTLVPE (289 aa). Residues tryptophan 78, 87-97, and 101-103 contribute to the substrate site; these read QRDHVSVSDGF and RAS. Glutamate 167 functions as the Nucleophile in the catalytic mechanism. The Proton donor role is filled by glutamate 172. Substrate is bound at residue arginine 197.

It belongs to the glycosyl hydrolase 16 family.

It carries out the reaction Hydrolysis of (1-&gt;4)-beta-D-galactosidic linkages in agarose, giving the tetramer as the predominant product.. Cleaves the beta-1,4-linkages between beta-D-galactose and alpha-L-3,6-anhydro-galactose residues in agarose. Cleaves agarose in a random manner with retention of the anomeric-bond configuration, producing beta-anomers that give rise progressively to alpha-anomers when mutarotation takes place. The sequence is that of Beta-agarase from Phocaeicola plebeius (strain DSM 17135 / JCM 12973 / CCUG 54634 / M2) (Bacteroides plebeius).